We begin with the raw amino-acid sequence, 131 residues long: Small ribosomal subunit protein bS6m (131 aa).

Belongs to the bacterial ribosomal protein bS6 family. Component of the mitochondrial small ribosomal subunit (mt-SSU). Mature yeast 74S mitochondrial ribosomes consist of a small (37S) and a large (54S) subunit. The 37S small subunit contains a 15S ribosomal RNA (15S mt-rRNA) and 34 different proteins. The 54S large subunit contains a 21S rRNA (21S mt-rRNA) and 46 different proteins.

It localises to the mitochondrion. Its function is as follows. Component of the mitochondrial ribosome (mitoribosome), a dedicated translation machinery responsible for the synthesis of mitochondrial genome-encoded proteins, including at least some of the essential transmembrane subunits of the mitochondrial respiratory chain. The mitoribosomes are attached to the mitochondrial inner membrane and translation products are cotranslationally integrated into the membrane. The chain is Small ribosomal subunit protein bS6m (MRP17) from Saccharomyces cerevisiae (strain ATCC 204508 / S288c) (Baker's yeast).